The primary structure comprises 913 residues: Protein SEY1 homolog (913 aa).

Residues 1–825 (MANASKTQII…ETGGQMSLKN (825 aa)) lie on the Cytoplasmic side of the membrane. The GB1/RHD3-type G domain occupies 33 to 288 (GFNYNVIAIL…IPADGFAQYC (256 aa)). 43–50 (GSQSSGKS) is a binding site for GTP. 2 disordered regions span residues 89-108 (AGGS…GDKP) and 436-455 (TEQD…AKKG). Coiled-coil stretches lie at residues 636 to 659 (DDEN…MESL) and 703 to 727 (IEII…VIIN). A helical transmembrane segment spans residues 826 to 846 (VPFAFWVILLILGWNEILMFT). Topologically, residues 847–849 (RLF) are lumenal. The chain crosses the membrane as a helical span at residues 850–870 (FRLNIILPMFMAFIIIVGSCL). The Cytoplasmic portion of the chain corresponds to 871–913 (YTGNAQVLSYLNKIAFIVIKHSYNFYKHLQTVGNQPTKPEKVD).

This sequence belongs to the TRAFAC class dynamin-like GTPase superfamily. GB1/RHD3 GTPase family. RHD3 subfamily.

It localises to the endoplasmic reticulum membrane. Functionally, probable GTP-binding protein involved in generating and maintaining the structure of the tubular endoplasmic reticulum network. This is Protein SEY1 homolog from Plasmodium chabaudi chabaudi.